The primary structure comprises 544 residues: Chaperonin GroEL (544 aa).

ATP contacts are provided by residues 29 to 32 (TLGP), 86 to 90 (DGTTT), Gly413, 476 to 478 (NAA), and Asp492.

The protein belongs to the chaperonin (HSP60) family. In terms of assembly, forms a cylinder of 14 subunits composed of two heptameric rings stacked back-to-back. Interacts with the co-chaperonin GroES.

The protein localises to the cytoplasm. The enzyme catalyses ATP + H2O + a folded polypeptide = ADP + phosphate + an unfolded polypeptide.. Functionally, together with its co-chaperonin GroES, plays an essential role in assisting protein folding. The GroEL-GroES system forms a nano-cage that allows encapsulation of the non-native substrate proteins and provides a physical environment optimized to promote and accelerate protein folding. In Bacillus thuringiensis (strain Al Hakam), this protein is Chaperonin GroEL.